The chain runs to 508 residues: UDP-N-acetylmuramoyl-L-alanyl-D-glutamate--2,6-diaminopimelate ligase (508 aa).

Position 43 (Ser43) interacts with UDP-N-acetyl-alpha-D-muramoyl-L-alanyl-D-glutamate. Position 124 to 130 (124 to 130) interacts with ATP; that stretch reads GTNGKTT. Residues 166–167, Ser193, and Arg201 each bind UDP-N-acetyl-alpha-D-muramoyl-L-alanyl-D-glutamate; that span reads TT. Lys233 carries the N6-carboxylysine modification. Meso-2,6-diaminopimelate-binding positions include Arg404, 428-431, Gly478, and Glu482; that span reads DNPR. Positions 428–431 match the Meso-diaminopimelate recognition motif motif; the sequence is DNPR.

The protein belongs to the MurCDEF family. MurE subfamily. Requires Mg(2+) as cofactor. In terms of processing, carboxylation is probably crucial for Mg(2+) binding and, consequently, for the gamma-phosphate positioning of ATP.

The protein resides in the cytoplasm. It carries out the reaction UDP-N-acetyl-alpha-D-muramoyl-L-alanyl-D-glutamate + meso-2,6-diaminopimelate + ATP = UDP-N-acetyl-alpha-D-muramoyl-L-alanyl-gamma-D-glutamyl-meso-2,6-diaminopimelate + ADP + phosphate + H(+). It functions in the pathway cell wall biogenesis; peptidoglycan biosynthesis. In terms of biological role, catalyzes the addition of meso-diaminopimelic acid to the nucleotide precursor UDP-N-acetylmuramoyl-L-alanyl-D-glutamate (UMAG) in the biosynthesis of bacterial cell-wall peptidoglycan. This chain is UDP-N-acetylmuramoyl-L-alanyl-D-glutamate--2,6-diaminopimelate ligase, found in Chlorobaculum tepidum (strain ATCC 49652 / DSM 12025 / NBRC 103806 / TLS) (Chlorobium tepidum).